The chain runs to 68 residues: Small integral membrane protein 10-like protein 3 (68 aa).

The sequence is that of Small integral membrane protein 10-like protein 3 from Homo sapiens (Human).